The chain runs to 73 residues: Large ribosomal subunit protein bL31 (73 aa).

Cys16, Cys18, Cys36, and Cys39 together coordinate Zn(2+).

It belongs to the bacterial ribosomal protein bL31 family. Type A subfamily. In terms of assembly, part of the 50S ribosomal subunit. Zn(2+) serves as cofactor.

Functionally, binds the 23S rRNA. This chain is Large ribosomal subunit protein bL31, found in Citrifermentans bemidjiense (strain ATCC BAA-1014 / DSM 16622 / JCM 12645 / Bem) (Geobacter bemidjiensis).